The sequence spans 244 residues: Phosphoribosyl isomerase A (244 aa).

Aspartate 10 functions as the Proton acceptor in the catalytic mechanism. The Proton donor role is filled by aspartate 129.

This sequence belongs to the HisA/HisF family.

It localises to the cytoplasm. It carries out the reaction 1-(5-phospho-beta-D-ribosyl)-5-[(5-phospho-beta-D-ribosylamino)methylideneamino]imidazole-4-carboxamide = 5-[(5-phospho-1-deoxy-D-ribulos-1-ylimino)methylamino]-1-(5-phospho-beta-D-ribosyl)imidazole-4-carboxamide. It catalyses the reaction N-(5-phospho-beta-D-ribosyl)anthranilate = 1-(2-carboxyphenylamino)-1-deoxy-D-ribulose 5-phosphate. Its pathway is amino-acid biosynthesis; L-histidine biosynthesis; L-histidine from 5-phospho-alpha-D-ribose 1-diphosphate: step 4/9. It participates in amino-acid biosynthesis; L-tryptophan biosynthesis; L-tryptophan from chorismate: step 3/5. Its function is as follows. Involved in both the histidine and tryptophan biosynthetic pathways. This Mycobacterium tuberculosis (strain CDC 1551 / Oshkosh) protein is Phosphoribosyl isomerase A (priA).